The chain runs to 172 residues: Small ribosomal subunit protein uS5 (172 aa).

An S5 DRBM domain is found at Leu17–Val80.

Belongs to the universal ribosomal protein uS5 family. Part of the 30S ribosomal subunit. Contacts proteins S4 and S8.

Its function is as follows. With S4 and S12 plays an important role in translational accuracy. Functionally, located at the back of the 30S subunit body where it stabilizes the conformation of the head with respect to the body. In Paraburkholderia phytofirmans (strain DSM 17436 / LMG 22146 / PsJN) (Burkholderia phytofirmans), this protein is Small ribosomal subunit protein uS5.